The primary structure comprises 230 residues: Orotidine 5'-phosphate decarboxylase (230 aa).

Substrate is bound by residues Asp10, Lys31, Asp58–Thr67, Thr117, Arg179, Gln188, Gly208, and Arg209. Lys60 functions as the Proton donor in the catalytic mechanism.

This sequence belongs to the OMP decarboxylase family. Type 1 subfamily. Homodimer.

The enzyme catalyses orotidine 5'-phosphate + H(+) = UMP + CO2. The protein operates within pyrimidine metabolism; UMP biosynthesis via de novo pathway; UMP from orotate: step 2/2. Catalyzes the decarboxylation of orotidine 5'-monophosphate (OMP) to uridine 5'-monophosphate (UMP). The protein is Orotidine 5'-phosphate decarboxylase of Staphylococcus epidermidis (strain ATCC 35984 / DSM 28319 / BCRC 17069 / CCUG 31568 / BM 3577 / RP62A).